The chain runs to 301 residues: Probable alpha-L-glutamate ligase (301 aa).

The region spanning 104 to 287 is the ATP-grasp domain; the sequence is LQLLSRRGIG…VAGMIIEHLE (184 aa). ATP contacts are provided by residues Lys-141, 178-179, Asp-187, and 211-213; these read EY and RSN. Residues Asp-248, Glu-260, and Asn-262 each coordinate Mg(2+). 3 residues coordinate Mn(2+): Asp-248, Glu-260, and Asn-262.

Belongs to the RimK family. Mg(2+) serves as cofactor. The cofactor is Mn(2+).

The polypeptide is Probable alpha-L-glutamate ligase (Pseudomonas entomophila (strain L48)).